We begin with the raw amino-acid sequence, 299 residues long: GTPase Era (299 aa).

Residues lysine 4–glutamate 171 enclose the Era-type G domain. The tract at residues glycine 12 to serine 19 is G1. A GTP-binding site is contributed by glycine 12–serine 19. The segment at glutamine 38–asparagine 42 is G2. Residues aspartate 59–glycine 62 form a G3 region. GTP is bound by residues aspartate 59–isoleucine 63 and asparagine 121–aspartate 124. The segment at asparagine 121–aspartate 124 is G4. A G5 region spans residues isoleucine 150–alanine 152. The region spanning threonine 202–lysine 280 is the KH type-2 domain.

Belongs to the TRAFAC class TrmE-Era-EngA-EngB-Septin-like GTPase superfamily. Era GTPase family. Monomer.

It localises to the cytoplasm. It is found in the cell membrane. Functionally, an essential GTPase that binds both GDP and GTP, with rapid nucleotide exchange. Plays a role in 16S rRNA processing and 30S ribosomal subunit biogenesis and possibly also in cell cycle regulation and energy metabolism. This chain is GTPase Era, found in Streptococcus agalactiae serotype III (strain NEM316).